A 79-amino-acid polypeptide reads, in one-letter code: MGGISIWQLLIILVIVVLLFGTKRLKGIGTDLGGAIKGFKKAVSEEEKDADFEQKKQVEEKSAAEPVSTETQSDVKEKS.

A helical membrane pass occupies residues 1-21; the sequence is MGGISIWQLLIILVIVVLLFG. Positions 45–79 are disordered; that stretch reads EEEKDADFEQKKQVEEKSAAEPVSTETQSDVKEKS. The span at 51 to 63 shows a compositional bias: basic and acidic residues; sequence DFEQKKQVEEKSA.

This sequence belongs to the TatA/E family. The Tat system comprises two distinct complexes: a TatABC complex, containing multiple copies of TatA, TatB and TatC subunits, and a separate TatA complex, containing only TatA subunits. Substrates initially bind to the TatABC complex, which probably triggers association of the separate TatA complex to form the active translocon.

The protein localises to the cell inner membrane. Functionally, part of the twin-arginine translocation (Tat) system that transports large folded proteins containing a characteristic twin-arginine motif in their signal peptide across membranes. TatA could form the protein-conducting channel of the Tat system. The protein is Sec-independent protein translocase protein TatA of Alteromonas mediterranea (strain DSM 17117 / CIP 110805 / LMG 28347 / Deep ecotype).